The primary structure comprises 1394 residues: DNA-directed RNA polymerase subunit beta' (1394 aa).

The Zn(2+) site is built by C70, C72, C85, and C88. Mg(2+)-binding residues include D470, D472, and D474. Zn(2+)-binding residues include C815, C889, C896, and C899.

Belongs to the RNA polymerase beta' chain family. The RNAP catalytic core consists of 2 alpha, 1 beta, 1 beta' and 1 omega subunit. When a sigma factor is associated with the core the holoenzyme is formed, which can initiate transcription. Mg(2+) serves as cofactor. The cofactor is Zn(2+).

The enzyme catalyses RNA(n) + a ribonucleoside 5'-triphosphate = RNA(n+1) + diphosphate. Its function is as follows. DNA-dependent RNA polymerase catalyzes the transcription of DNA into RNA using the four ribonucleoside triphosphates as substrates. This Anaeromyxobacter dehalogenans (strain 2CP-C) protein is DNA-directed RNA polymerase subunit beta'.